The primary structure comprises 113 residues: N(2)-fixation sustaining protein CowN (113 aa).

This sequence belongs to the CowN family.

Is required to sustain N(2)-dependent growth in the presence of low levels of carbon monoxide (CO). Probably acts by protecting the N(2) fixation ability of the nitrogenase complex, which is inactivated in the presence of CO. The protein is N(2)-fixation sustaining protein CowN of Azoarcus sp. (strain BH72).